The following is a 425-amino-acid chain: Cytokine receptor-like factor 1 (425 aa).

A signal peptide spans 1 to 33 (MPAGRPGPVAQSARRPPRPLSSLWSPLLLCVLG). The Ig-like C2-type domain maps to 35-134 (PRGGSGAHTA…SILAGSCLYV (100 aa)). Asparagine 95, asparagine 107, and asparagine 143 each carry an N-linked (GlcNAc...) asparagine glycan. Fibronectin type-III domains lie at 140–235 (KPFN…VLDV) and 240–344 (PPPD…TPRS). Residues cysteine 146 and cysteine 156 are joined by a disulfide bond. Asparagine 171 is a glycosylation site (N-linked (GlcNAc...) asparagine). An intrachain disulfide couples cysteine 187 to cysteine 198. A Phosphoserine modification is found at serine 222. Residue asparagine 295 is glycosylated (N-linked (GlcNAc...) asparagine). Residues 330–334 (WSEWS) carry the WSXWS motif motif. A disordered region spans residues 335–366 (HPTAASTPRSERPGPGGGVCEPRGGEPSSGPV). The N-linked (GlcNAc...) asparagine glycan is linked to asparagine 385. Positions 402-425 (HKTRNQDEGILPSGRRGAARGPAG) are disordered. Low complexity predominate over residues 415–425 (GRRGAARGPAG).

Belongs to the type I cytokine receptor family. Type 3 subfamily. As to quaternary structure, forms covalent di- and tetramers. Forms a heteromeric complex with cardiotrophin-like cytokine CLCF1/CLC; the CRLF1-CLCF1 complex is a ligand for the ciliary neurotrophic factor receptor/CNTFR. The CRLF1-CLCF1 heterodimer, as well as tripartite signaling complex formed by CRLF1, CLCF1 and CNTFR bind SORL1 (via N-terminal ectodomain); within this complex, the interaction is mediated predominantly by the CRLF1 moiety. In terms of tissue distribution, widely expressed in the embryo. Not detected in the brain of adult mice.

It is found in the secreted. Functionally, in complex with CLCF1, forms a heterodimeric neurotropic cytokine that plays a crucial role during neuronal development. Plays a role in the initiation and/or maintenance of suckling in neonatal mice. May also play a regulatory role in the immune system. This is Cytokine receptor-like factor 1 (Crlf1) from Mus musculus (Mouse).